We begin with the raw amino-acid sequence, 450 residues long: Hyaluronidase-1 (450 aa).

The first 35 residues, 1–35, serve as a signal peptide directing secretion; it reads MRPFSLEVSLHLPWAMAAHLLPVCTLFLNLLSMTQ. 2 disulfide bridges follow: cysteine 58–cysteine 348 and cysteine 222–cysteine 236. N-linked (GlcNAc...) asparagine glycosylation is present at asparagine 85. Glutamate 146 (proton donor) is an active-site residue. N-linked (GlcNAc...) asparagine glycosylation is found at asparagine 231 and asparagine 365. 3 disulfides stabilise this stretch: cysteine 373–cysteine 384, cysteine 378–cysteine 433, and cysteine 435–cysteine 444. An N-linked (GlcNAc...) asparagine glycan is attached at asparagine 398. The EGF-like domain occupies 433–444; sequence CRCYRGWRGTRC.

The protein belongs to the glycosyl hydrolase 56 family.

It is found in the secreted. The protein localises to the lysosome. It carries out the reaction Random hydrolysis of (1-&gt;4)-linkages between N-acetyl-beta-D-glucosamine and D-glucuronate residues in hyaluronate.. In terms of biological role, may have a role in promoting tumor progression. May block the TGFB1-enhanced cell growth. This is Hyaluronidase-1 (HYAL1) from Bos taurus (Bovine).